The sequence spans 51 residues: MAVPKKRTSISKKRIRKTIWKKKAYWASLKAFSLAKSLSTGNSKSFFYSKF.

The protein belongs to the bacterial ribosomal protein bL32 family.

Its subcellular location is the plastid. The protein resides in the chloroplast. The chain is Large ribosomal subunit protein bL32c from Oenothera elata subsp. hookeri (Hooker's evening primrose).